Consider the following 61-residue polypeptide: Metallothionein-2B (61 aa).

Met1 is subject to N-acetylmethionine. A beta region spans residues 1 to 29 (MDPNCSCATGDSCTCASSCKCKECKCTSC). A divalent metal cation is bound by residues Cys5, Cys7, Cys13, Cys15, Cys19, Cys21, Cys24, Cys26, Cys29, Cys33, Cys34, Cys36, Cys37, Cys41, Cys44, Cys48, Cys50, Cys57, Cys59, and Cys60. Positions 30 to 61 (KKSCCSCCPAGCTKCAQGCICKGASDKCSCCA) are alpha.

The protein belongs to the metallothionein superfamily. Type 1 family. In terms of assembly, monomer.

Functionally, metallothioneins have a high content of cysteine residues that bind various heavy metals; these proteins are transcriptionally regulated by both heavy metals and glucocorticoids. The polypeptide is Metallothionein-2B (Oryctolagus cuniculus (Rabbit)).